The primary structure comprises 327 residues: Glycerol-3-phosphate dehydrogenase [NAD(P)+] (327 aa).

3 residues coordinate NADPH: Trp15, Arg35, and Lys109. The sn-glycerol 3-phosphate site is built by Lys109, Gly137, and Ser139. Position 141 (Ala141) interacts with NADPH. Sn-glycerol 3-phosphate contacts are provided by Lys192, Asp245, Ser255, Arg256, and Asn257. The active-site Proton acceptor is Lys192. Residue Arg256 participates in NADPH binding. NADPH contacts are provided by Leu275 and Glu277.

Belongs to the NAD-dependent glycerol-3-phosphate dehydrogenase family.

The protein localises to the cytoplasm. The catalysed reaction is sn-glycerol 3-phosphate + NAD(+) = dihydroxyacetone phosphate + NADH + H(+). It carries out the reaction sn-glycerol 3-phosphate + NADP(+) = dihydroxyacetone phosphate + NADPH + H(+). It functions in the pathway membrane lipid metabolism; glycerophospholipid metabolism. In terms of biological role, catalyzes the reduction of the glycolytic intermediate dihydroxyacetone phosphate (DHAP) to sn-glycerol 3-phosphate (G3P), the key precursor for phospholipid synthesis. The protein is Glycerol-3-phosphate dehydrogenase [NAD(P)+] of Chelativorans sp. (strain BNC1).